Consider the following 709-residue polypeptide: PP2C-like domain-containing protein CG9801 (709 aa).

Disordered regions lie at residues 121-222 (DCYG…NSER), 503-530 (LHPS…SRPK), and 678-709 (GGGE…ETNF). Over residues 130–143 (PPVQVATQNSTRLT) the composition is skewed to polar residues. A compositionally biased stretch (low complexity) spans 182-196 (ANLAAASAGTDAGKA). Over residues 197–217 (NSDQNNRNVLNAKTEVSTDGD) the composition is skewed to polar residues. In terms of domain architecture, PPM-type phosphatase spans 259–503 (SVSLYETNML…KSASAIYARL (245 aa)).

This chain is PP2C-like domain-containing protein CG9801, found in Drosophila melanogaster (Fruit fly).